Here is a 2197-residue protein sequence, read N- to C-terminus: Activating signal cointegrator 1 complex subunit 3 (2197 aa).

Residue Ser12 is modified to Phosphoserine. Coiled-coil stretches lie at residues 18 to 80 (KQDN…AKQI) and 328 to 356 (IQSE…KAGE). Residues 487 to 670 (DTAYNTNENM…FLHVNPYIGL (184 aa)) form the Helicase ATP-binding 1 domain. An ATP-binding site is contributed by 500–507 (APTGAGKT). N6-acetyllysine is present on Lys573. The short motif at 612-615 (DEVH) is the DEVH box element. A Helicase C-terminal 1 domain is found at 697–915 (QLNNMDEVCY…GTVTNVEEAV (219 aa)). Residues 979–1288 (STDLGRTASH…GAEAVCIINF (310 aa)) enclose the SEC63 1 domain. The 176-residue stretch at 1337-1512 (HTLYHTDCNV…WLNIKQMGLF (176 aa)) folds into the Helicase ATP-binding 2 domain. 1350–1357 (APTGSGKT) serves as a coordination point for ATP. The DEIH box motif lies at 1454–1457 (DEIH). The region spanning 1565 to 1739 (RMLSSMTKLE…VLSDHLNAEI (175 aa)) is the Helicase C-terminal 2 domain. An SEC63 2 domain is found at 1812–2175 (PLTCGRIASY…YLGLDQQYDI (364 aa)).

This sequence belongs to the helicase family. As to quaternary structure, identified in the ASCC complex that contains ASCC1, ASCC2 and ASCC3. Functions as a scaffolding subunit that interacts directly with both ASCC1 and ASCC2. Interacts directly with ALKBH3, and thereby recruits ALKBH3 to the ASCC complex. Part of the ASC-1/TRIP4 complex, that contains TRIP4, ASCC1, ASCC2 and ASCC3. Part of the RQT (ribosome quality control trigger) complex, that contains ASCC2, ASCC3 and TRIP4. Associates with ribosomes; recruited to collided ribosomes. Interacts with ZCCHC4. Interacts with ZNF598. Interacts with RPS3.

It is found in the nucleus. The protein resides in the nucleus speckle. Its subcellular location is the cytoplasm. The protein localises to the cytosol. It carries out the reaction Couples ATP hydrolysis with the unwinding of duplex DNA by translocating in the 3'-5' direction.. The catalysed reaction is ATP + H2O = ADP + phosphate + H(+). Functionally, ATPase involved both in DNA repair and rescue of stalled ribosomes. 3'-5' DNA helicase involved in repair of alkylated DNA: promotes DNA unwinding to generate single-stranded substrate needed for ALKBH3, enabling ALKBH3 to process alkylated N3-methylcytosine (3mC) within double-stranded regions. Also involved in activation of the ribosome quality control (RQC) pathway, a pathway that degrades nascent peptide chains during problematic translation. Drives the splitting of stalled ribosomes that are ubiquitinated in a ZNF598-dependent manner, as part of the ribosome quality control trigger (RQT) complex. Part of the ASC-1 complex that enhances NF-kappa-B, SRF and AP1 transactivation. The chain is Activating signal cointegrator 1 complex subunit 3 (Ascc3) from Rattus norvegicus (Rat).